We begin with the raw amino-acid sequence, 818 residues long: Sorting nexin-29 (818 aa).

The RUN domain maps to 36-180; that stretch reads SDSDSRVTCL…ILFAINIDNK (145 aa). Residues 267 to 299 form a disordered region; the sequence is VSFDDDEEEQGTGDTLKKMPGTAESSEENSDRS. Ser268, Ser291, Ser292, Ser330, Ser344, Ser447, and Ser452 each carry phosphoserine. 2 disordered regions span residues 343–375 and 441–462; these read KSID…PDRT and RYRE…PSAS. Over residues 445 to 462 the composition is skewed to low complexity; sequence ASSPGQGSPLSSLLPSAS. A coiled-coil region spans residues 467-547; that stretch reads MTVHELRQAI…VLKVQLKKYV (81 aa). Ser642 is subject to Phosphoserine. The residue at position 644 (Thr644) is a Phosphothreonine. Phosphoserine is present on residues Ser645 and Ser649. The PX domain occupies 659–782; sequence ALINVWIPSV…PFFVDITPPG (124 aa). The segment at 781–818 is disordered; that stretch reads PGEPLNKSSRPKAVSRFPKLSRGHPREVRNVEPQSGDL.

It belongs to the sorting nexin family.

In Mus musculus (Mouse), this protein is Sorting nexin-29 (Snx29).